The chain runs to 146 residues: MORN repeat-containing protein 4 (146 aa).

MORN repeat units lie at residues Tyr-16–Thr-38, Tyr-39–Arg-61, Tyr-62–Thr-84, and Phe-85–His-107.

As to quaternary structure, interacts with MYO3A.

The protein localises to the cytoplasm. It is found in the cell projection. It localises to the filopodium tip. Its subcellular location is the stereocilium. Functionally, plays a role in promoting axonal degeneration following neuronal injury by toxic insult or trauma. This chain is MORN repeat-containing protein 4 (MORN4), found in Homo sapiens (Human).